The sequence spans 341 residues: tRNA N6-adenosine threonylcarbamoyltransferase (341 aa).

Fe cation-binding residues include H111 and H115. Substrate-binding positions include 134–138 (LVSGG), D167, G180, and N276. D304 contributes to the Fe cation binding site.

It belongs to the KAE1 / TsaD family. It depends on Fe(2+) as a cofactor.

The protein resides in the cytoplasm. The enzyme catalyses L-threonylcarbamoyladenylate + adenosine(37) in tRNA = N(6)-L-threonylcarbamoyladenosine(37) in tRNA + AMP + H(+). In terms of biological role, required for the formation of a threonylcarbamoyl group on adenosine at position 37 (t(6)A37) in tRNAs that read codons beginning with adenine. Is involved in the transfer of the threonylcarbamoyl moiety of threonylcarbamoyl-AMP (TC-AMP) to the N6 group of A37, together with TsaE and TsaB. TsaD likely plays a direct catalytic role in this reaction. This is tRNA N6-adenosine threonylcarbamoyltransferase from Ectopseudomonas mendocina (strain ymp) (Pseudomonas mendocina).